The chain runs to 492 residues: MLLLGLLLLTALAGARLLWNKWKYRSLHLPPLAPGFLHLLQPDLPIYLLGLTQKLGPVYRLRLGLQDVVVLNSKRTIEEALIRRWVDFAGRPQMPSYKLVSQHYQDLSLGDYSLLWKAHKKLTRSALLLGIRNSMEPLVEQLTQEFCERMRAQAGTPVAIQKEFSFLTCSVICCLTFGDKEDTLVHAFHDCVEDLMKSWEHWSIQVLDIVPFLRFFPNPGLRRLKQALENRDRIVEKQLRQHKDSMVAGQWRDMTDYMLQGMGKPKVEKGHGRLLEGHVHMSVVDLFIGGTETTATTLSWAVAFLLHHPEIQQRLQEELDCELGPGASGSRVPLKDPSRLPLLTATIAEVLRLRPVVPLALPHRTTRHSSILGYDIPEGTVVIPNLQGAHLDDTVWEQPHEFRPDRFLVPGASPRVLAFGCGARVCLGEPLARLELFVVLARLLHAFTLLPPTGPLPSLRPRSHCGINLTMQPFQVRLQPRGAVAPGPSQHQ.

Heme b is bound by residues arginine 91 and lysine 120. Residue arginine 231 participates in 17alpha-hydroxyprogesterone binding. Residue arginine 231 coordinates progesterone. Heme b contacts are provided by histidine 363, arginine 424, and cysteine 426.

Belongs to the cytochrome P450 family. Requires heme b as cofactor.

Its subcellular location is the endoplasmic reticulum membrane. It is found in the microsome membrane. It carries out the reaction 17alpha-hydroxyprogesterone + reduced [NADPH--hemoprotein reductase] + O2 = 11-deoxycortisol + oxidized [NADPH--hemoprotein reductase] + H2O + H(+). The enzyme catalyses progesterone + reduced [NADPH--hemoprotein reductase] + O2 = 21-hydroxyprogesterone + oxidized [NADPH--hemoprotein reductase] + H2O + H(+). Specifically catalyzes the 21-hydroxylation of steroids. Required for the adrenal synthesis of mineralocorticoids and glucocorticoids. The chain is Steroid 21-hydroxylase (CYP21) from Felis catus (Cat).